Consider the following 499-residue polypeptide: Probable cytosol aminopeptidase (499 aa).

Mn(2+)-binding residues include K263 and D268. K275 is an active-site residue. Mn(2+) contacts are provided by D286, D345, and E347. R349 is a catalytic residue.

It belongs to the peptidase M17 family. The cofactor is Mn(2+).

It is found in the cytoplasm. It carries out the reaction Release of an N-terminal amino acid, Xaa-|-Yaa-, in which Xaa is preferably Leu, but may be other amino acids including Pro although not Arg or Lys, and Yaa may be Pro. Amino acid amides and methyl esters are also readily hydrolyzed, but rates on arylamides are exceedingly low.. The enzyme catalyses Release of an N-terminal amino acid, preferentially leucine, but not glutamic or aspartic acids.. In terms of biological role, presumably involved in the processing and regular turnover of intracellular proteins. Catalyzes the removal of unsubstituted N-terminal amino acids from various peptides. In Chlamydia muridarum (strain MoPn / Nigg), this protein is Probable cytosol aminopeptidase (pepA).